The sequence spans 443 residues: MEAYIRQKRASPGMVQASDLQINRPMSGMRSNSRELHAYDGPMQFISSPQNPDQILTNGSPGGITPVAVNTSRNHSNNMRSLSTINQEADLIEEISSHELEDEESSPVTVIEQHQQSASHSANSTQSQKPRARQHSFSDNLDEDDYTNRNVAAAAPVRPAGMASSPYKDATLEGSSNGTGNGTGGESEGDVIGNIDQFVMQPAPQGVLYKCRITRDRKGMDRGLFPIYYLHLERDYGKKIFLLGGRKRKKSKTSNYIVSCDPTDLSRNADGFCGKLRSNVFGTSFTVFDNGNKESTESPRLDLAVIIYDTNILGFKGPRNMTVILPGMTEDDQRVKISSADPKQQGILDLWKMKNMDNIVELHNKTPVWNDETQSYVLNFHGRVTQASVKNFQLVHDSDPEYIVMQFGRTSEDVFTMDYRYPLCAMQAFAIALSSFDGKIACE.

Disordered stretches follow at residues 57 to 85 (TNGS…LSTI) and 98 to 189 (HELE…ESEG). Residues 68–85 (AVNTSRNHSNNMRSLSTI) are compositionally biased toward polar residues. The span at 113–128 (QHQQSASHSANSTQSQ) shows a compositional bias: low complexity. Phosphoserine is present on S136. Residues 148 to 160 (NRNVAAAAPVRPA) show a composition bias toward low complexity. Residues 177–186 (NGTGNGTGGE) show a composition bias toward gly residues.

It belongs to the TUB family.

Its subcellular location is the cytoplasm. It localises to the nucleus. It is found in the cell projection. The protein localises to the cilium membrane. The protein resides in the rhabdomere. This chain is Protein king tubby, found in Drosophila yakuba (Fruit fly).